We begin with the raw amino-acid sequence, 435 residues long: D-inositol 3-phosphate glycosyltransferase (435 aa).

Position 16 (histidine 16) interacts with 1D-myo-inositol 3-phosphate. Residues glutamine 22–proline 23 and glycine 30 contribute to the UDP-N-acetyl-alpha-D-glucosamine site. Residues aspartate 27–asparagine 32, lysine 85, tyrosine 118, threonine 142, and arginine 162 contribute to the 1D-myo-inositol 3-phosphate site. 3 residues coordinate UDP-N-acetyl-alpha-D-glucosamine: arginine 237, lysine 242, and valine 303. Residues tyrosine 312, arginine 313, and alanine 315 each coordinate Mg(2+). 2 residues coordinate UDP-N-acetyl-alpha-D-glucosamine: glutamate 325 and glutamate 333. Threonine 339 provides a ligand contact to Mg(2+).

This sequence belongs to the glycosyltransferase group 1 family. MshA subfamily. In terms of assembly, homodimer.

It catalyses the reaction 1D-myo-inositol 3-phosphate + UDP-N-acetyl-alpha-D-glucosamine = 1D-myo-inositol 2-acetamido-2-deoxy-alpha-D-glucopyranoside 3-phosphate + UDP + H(+). Catalyzes the transfer of a N-acetyl-glucosamine moiety to 1D-myo-inositol 3-phosphate to produce 1D-myo-inositol 2-acetamido-2-deoxy-glucopyranoside 3-phosphate in the mycothiol biosynthesis pathway. This chain is D-inositol 3-phosphate glycosyltransferase, found in Kineococcus radiotolerans (strain ATCC BAA-149 / DSM 14245 / SRS30216).